The chain runs to 410 residues: LL-diaminopimelate aminotransferase (410 aa).

Substrate contacts are provided by Tyr15 and Gly42. Pyridoxal 5'-phosphate is bound by residues Tyr72, 108-109 (AK), Tyr132, Asn187, Tyr218, and 246-248 (SFS). 3 residues coordinate substrate: Lys109, Tyr132, and Asn187. The residue at position 249 (Lys249) is an N6-(pyridoxal phosphate)lysine. Residues Arg257 and Asn292 each contribute to the pyridoxal 5'-phosphate site. Residues Asn292 and Arg388 each contribute to the substrate site.

Belongs to the class-I pyridoxal-phosphate-dependent aminotransferase family. LL-diaminopimelate aminotransferase subfamily. Homodimer. Requires pyridoxal 5'-phosphate as cofactor.

It catalyses the reaction (2S,6S)-2,6-diaminopimelate + 2-oxoglutarate = (S)-2,3,4,5-tetrahydrodipicolinate + L-glutamate + H2O + H(+). It participates in amino-acid biosynthesis; L-lysine biosynthesis via DAP pathway; LL-2,6-diaminopimelate from (S)-tetrahydrodipicolinate (aminotransferase route): step 1/1. In terms of biological role, involved in the synthesis of meso-diaminopimelate (m-DAP or DL-DAP), required for both lysine and peptidoglycan biosynthesis. Catalyzes the direct conversion of tetrahydrodipicolinate to LL-diaminopimelate. Is also able to catalyze the reverse reaction in vitro, i.e. the transamination of LL-diaminopimelate with 2-oxoglutarate to produce 2-oxo-6-aminopimelate (in equilibrium with tetrahydrodipicolinate) and glutamate. Has maximal aminotransferase activity using 2-oxoglutarate as an amino group acceptor, and cannot use oxaloacetate instead of 2-oxoglutarate, although 2-oxoadipate can substitute with 21% relative activity. Cannot use m-DAP, lysine or ornithine as the amino-group donor, when using 2-oxoglutarate as the amino-group acceptor. The polypeptide is LL-diaminopimelate aminotransferase (Methanothermobacter thermautotrophicus (strain ATCC 29096 / DSM 1053 / JCM 10044 / NBRC 100330 / Delta H) (Methanobacterium thermoautotrophicum)).